A 322-amino-acid chain; its full sequence is MIKAGIIGGAGYTAGELIRLLLNHPETEIVFINSSSNAGNRITDVHEGLYGETDLRFTDQLPLDAIDVLFFCTAHGDTKKFMESHNVPEDLKIIDLSMDYRIKSDDHDFIYGLPELNRRATCTAKHVANPGCFATCIQLGLLPLAKNLMLTGDVSVNAITGSTGAGVKPGATSHFSWRNNNISIYKAFDHQHVPEIKQSLKQLQNSFDSEIDFIPYRGDFPRGIFATLVVKTKVALEEIVRMYEEYYAKDSFVHIVDKNIDLKQVVNTNKCLIHLEKHGDKLLIISCIDNLLKGASGQAVHNMNLMFNLEETVGLRLKPSAF.

Residue cysteine 132 is part of the active site.

The protein belongs to the NAGSA dehydrogenase family. Type 1 subfamily.

It localises to the cytoplasm. It catalyses the reaction N-acetyl-L-glutamate 5-semialdehyde + phosphate + NADP(+) = N-acetyl-L-glutamyl 5-phosphate + NADPH + H(+). Its pathway is amino-acid biosynthesis; L-arginine biosynthesis; N(2)-acetyl-L-ornithine from L-glutamate: step 3/4. Its function is as follows. Catalyzes the NADPH-dependent reduction of N-acetyl-5-glutamyl phosphate to yield N-acetyl-L-glutamate 5-semialdehyde. The chain is N-acetyl-gamma-glutamyl-phosphate reductase from Bacteroides thetaiotaomicron (strain ATCC 29148 / DSM 2079 / JCM 5827 / CCUG 10774 / NCTC 10582 / VPI-5482 / E50).